A 257-amino-acid polypeptide reads, in one-letter code: Phycoerythrobilin:ferredoxin oxidoreductase (257 aa).

The protein belongs to the HY2 family.

It carries out the reaction (3Z)-phycoerythrobilin + oxidized 2[4Fe-4S]-[ferredoxin] = 15,16-dihydrobiliverdin + reduced 2[4Fe-4S]-[ferredoxin] + 2 H(+). Functionally, catalyzes the two-electron reduction of the C2 and C3(1) diene system of 15,16-dihydrobiliverdin. This chain is Phycoerythrobilin:ferredoxin oxidoreductase, found in Prochlorococcus marinus (strain MIT 9303).